Reading from the N-terminus, the 86-residue chain is Large ribosomal subunit protein uL23 (86 aa).

It belongs to the universal ribosomal protein uL23 family. As to quaternary structure, part of the 50S ribosomal subunit. Contacts protein L29.

Functionally, binds to 23S rRNA. One of the proteins that surrounds the polypeptide exit tunnel on the outside of the ribosome. This Methanocaldococcus jannaschii (strain ATCC 43067 / DSM 2661 / JAL-1 / JCM 10045 / NBRC 100440) (Methanococcus jannaschii) protein is Large ribosomal subunit protein uL23.